A 63-amino-acid polypeptide reads, in one-letter code: Large ribosomal subunit protein uL29 (63 aa).

It belongs to the universal ribosomal protein uL29 family.

The sequence is that of Large ribosomal subunit protein uL29 from Caulobacter vibrioides (strain ATCC 19089 / CIP 103742 / CB 15) (Caulobacter crescentus).